Here is a 194-residue protein sequence, read N- to C-terminus: Adenylate kinase (194 aa).

Residue 8-16 (GIPGVGKTT) participates in ATP binding.

The protein belongs to the archaeal adenylate kinase family.

The protein resides in the cytoplasm. The enzyme catalyses AMP + ATP = 2 ADP. In Sulfurisphaera tokodaii (strain DSM 16993 / JCM 10545 / NBRC 100140 / 7) (Sulfolobus tokodaii), this protein is Adenylate kinase (adkA).